Reading from the N-terminus, the 1806-residue chain is SH3 and multiple ankyrin repeat domains protein 3 (1806 aa).

The tract at residues methionine 76–glutamine 150 is intramolecular interaction with the ANK repeats. Tyrosine 197 carries the post-translational modification Phosphotyrosine. ANK repeat units lie at residues serine 223 to phenylalanine 253, aspartate 257 to tyrosine 286, arginine 290 to isoleucine 320, asparagine 324 to alanine 353, serine 357 to valine 386, and asparagine 390 to proline 420. Positions alanine 407 to serine 416 are enriched in basic and acidic residues. Positions alanine 407–serine 467 are disordered. Residues leucine 439–alanine 461 show a composition bias toward pro residues. Phosphoserine is present on residues serine 448, serine 450, serine 463, serine 470, and serine 558. The SH3 domain maps to valine 546 to methionine 605. A Phosphotyrosine modification is found at tyrosine 631. One can recognise a PDZ domain in the interval valine 646–threonine 740. Disordered regions lie at residues lysine 665–aspartate 689 and proline 760–proline 853. Residues proline 753–proline 760 are required for interaction with ABI1. Serine 770 carries the post-translational modification Phosphoserine. A compositionally biased stretch (pro residues) spans alanine 813–proline 845. A phosphoserine mark is found at serine 857, serine 866, and serine 877. Residues arginine 871–lysine 1021 form a disordered region. A compositionally biased stretch (pro residues) spans aspartate 906–proline 915. Serine 966 and serine 973 each carry phosphoserine. Phosphothreonine is present on threonine 988. A compositionally biased stretch (gly residues) spans proline 993–serine 1013. Phosphotyrosine is present on tyrosine 1006. The residue at position 1041 (arginine 1041) is an Asymmetric dimethylarginine. The segment covering proline 1115 to proline 1124 has biased composition (low complexity). 3 disordered regions span residues proline 1115 to leucine 1460, alanine 1475 to alanine 1525, and serine 1546 to arginine 1584. The span at threonine 1173–alanine 1193 shows a compositional bias: basic and acidic residues. Residue threonine 1204 is modified to Phosphothreonine. Phosphoserine is present on residues serine 1208, serine 1233, serine 1237, and serine 1240. Residues glutamate 1251 to lysine 1261 are compositionally biased toward pro residues. A Phosphothreonine modification is found at threonine 1309. Position 1328 is a phosphoserine (serine 1328). Over residues leucine 1360–glutamate 1370 the composition is skewed to basic and acidic residues. Composition is skewed to low complexity over residues glutamate 1371–valine 1392 and histidine 1444–leucine 1460. The short motif at proline 1485–proline 1491 is the SH3-binding element. Serine 1495 is subject to Phosphoserine. Over residues serine 1495–arginine 1505 the composition is skewed to polar residues. A coiled-coil region spans residues isoleucine 1569–glutamate 1589. A phosphoserine mark is found at serine 1585, serine 1596, serine 1604, and serine 1614. Low complexity predominate over residues proline 1627–serine 1637. Residues proline 1627–glycine 1664 form a disordered region. Positions valine 1638–alanine 1657 are enriched in pro residues. 3 positions are modified to phosphoserine: serine 1709, serine 1711, and serine 1713. Residues tryptophan 1743 to serine 1806 form the SAM domain.

As to quaternary structure, may homomultimerize via its SAM domain. Interacts with BAIAP2, DBNL and SLC17A7/VGLUT1. Interacts with DLGAP1/GKAP, GRM1/MGLUR1, GRM5/MGLUR5 and LZTS3 C-termini via its PDZ domain. Interacts with ABI1, HOMER1, HOMER2, HOMER3 and CTTN/cortactin SH3 domain. Is part of a complex with DLG4/PSD-95 and DLGAP1/GKAP. Interacts (via PDZ domain) with the GRIA1 subunit of the AMPA receptor (via PDZ-binding motif). Interacts with WASF1 and CYFIP2; the interactions mediate the association of SHANK3 with the WAVE1 complex. Interacts with ARPC2; the interaction probably mediates the association of SHANK3 with the Arp2/3 complex. Interacts (via ANK repeats) with SHARPIN and SPTAN1. Interacts (via PDZ domain) with ARHGAP44 (probably via PDZ-binding motif); the interaction takes place in dendritic spines and promotes GRIA1 exocytosis. Interacts with CAMK2A. Interacts with DIP2A. Interacts with ADGRL3. Expressed in the cerebral cortex and the cerebellum.

It is found in the cytoplasm. Its subcellular location is the postsynaptic density. It localises to the cell projection. The protein resides in the dendritic spine. Its function is as follows. Major scaffold postsynaptic density protein which interacts with multiple proteins and complexes to orchestrate the dendritic spine and synapse formation, maturation and maintenance. Interconnects receptors of the postsynaptic membrane including NMDA-type and metabotropic glutamate receptors via complexes with GKAP/PSD-95 and HOMER, respectively, and the actin-based cytoskeleton. Plays a role in the structural and functional organization of the dendritic spine and synaptic junction through the interaction with Arp2/3 and WAVE1 complex as well as the promotion of the F-actin clusters. By way of this control of actin dynamics, participates in the regulation of developing neurons growth cone motility and the NMDA receptor-signaling. Also modulates GRIA1 exocytosis and GRM5/MGLUR5 expression and signaling to control the AMPA and metabotropic glutamate receptor-mediated synaptic transmission and plasticity. May be required at an early stage of synapse formation and be inhibited by IGF1 to promote synapse maturation. In Homo sapiens (Human), this protein is SH3 and multiple ankyrin repeat domains protein 3 (SHANK3).